Reading from the N-terminus, the 129-residue chain is uncharacterized protein (129 aa).

Positions 1-17 (MCPECFFLMLFFCGYRA) are cleaved as a signal peptide. A compositionally biased stretch (low complexity) spans 26–36 (SSSSSSSFRSS). Residues 26-76 (SSSSSSSFRSSPAYGFSGRPPGGAGCRERSQRSCLRPGGLPSLTRNPGLQR) form a disordered region.

This is an uncharacterized protein from Escherichia coli O157:H7.